A 195-amino-acid polypeptide reads, in one-letter code: Large ribosomal subunit protein bL25 (195 aa).

Belongs to the bacterial ribosomal protein bL25 family. CTC subfamily. As to quaternary structure, part of the 50S ribosomal subunit; part of the 5S rRNA/L5/L18/L25 subcomplex. Contacts the 5S rRNA. Binds to the 5S rRNA independently of L5 and L18.

In terms of biological role, this is one of the proteins that binds to the 5S RNA in the ribosome where it forms part of the central protuberance. This chain is Large ribosomal subunit protein bL25, found in Geobacter metallireducens (strain ATCC 53774 / DSM 7210 / GS-15).